The sequence spans 319 residues: Myoblast determination protein 1 (319 aa).

Residue M1 forms a Peptide (Met-Gly) (interchain with G-Cter in ubiquitin) linkage. N6-methyllysine; by EHMT2 is present on K104. Residues 109–160 (DRRKAATMRERRRLSKVNEAFETLKRCTSSNPNQRLPKVEILRNAIRYIEGL) form the bHLH domain. Disordered regions lie at residues 174 to 221 (AAAA…SGAR) and 266 to 319 (APAL…YQVL). Polar residues-rich tracts occupy residues 197–207 (SDASSPRSNCS) and 308–319 (ASANPNPIYQVL).

Efficient DNA binding requires dimerization with another bHLH protein. Seems to form active heterodimers with ITF-2. Interacts with SUV39H1. Interacts with DDX5. Interacts with CHD2. Interacts with TSC22D3. Interacts with SETD3. Interacts with P-TEFB complex; promotes the transcriptional activity of MYOD1 through its CDK9-mediated phosphorylation. Interacts with CSRP3. Interacts with NUPR1. Post-translationally, phosphorylated by CDK9. This phosphorylation promotes its function in muscle differentiation. Acetylated by a complex containing EP300 and PCAF. The acetylation is essential to activate target genes. Conversely, its deacetylation by SIRT1 inhibits its function. In terms of processing, ubiquitinated on the N-terminus; which is required for proteasomal degradation. Post-translationally, methylation at Lys-104 by EHMT2/G9a inhibits myogenic activity.

Its subcellular location is the nucleus. Functionally, acts as a transcriptional activator that promotes transcription of muscle-specific target genes and plays a role in muscle differentiation. Together with MYF5 and MYOG, co-occupies muscle-specific gene promoter core region during myogenesis. Induces fibroblasts to differentiate into myoblasts. Interacts with and is inhibited by the twist protein. This interaction probably involves the basic domains of both proteins. This chain is Myoblast determination protein 1 (MYOD1), found in Sus scrofa (Pig).